Reading from the N-terminus, the 358-residue chain is Acid phosphatase (358 aa).

Positions 1-17 (MKFSTIALPLLASAALA) are cleaved as a signal peptide. N20, N27, and N32 each carry an N-linked (GlcNAc...) asparagine glycan. The interval 21–41 (SSHSGTNATSHNSTVPNENSK) is disordered. Positions 49, 50, and 81 each coordinate Mg(2+). N-linked (GlcNAc...) asparagine glycosylation is found at N92 and N145. A Mg(2+)-binding site is contributed by N156. S189 is an active-site residue. N199 and N278 each carry an N-linked (GlcNAc...) asparagine glycan.

Belongs to the SurE nucleotidase family. The cofactor is Mg(2+).

It is found in the secreted. It carries out the reaction a phosphate monoester + H2O = an alcohol + phosphate. Probably serves to scavenge phosphorus for growing cells. The protein is Acid phosphatase (PHO2) of Yarrowia lipolytica (strain CLIB 122 / E 150) (Yeast).